The sequence spans 74 residues: Progonadoliberin-3 (74 aa).

A signal peptide spans 1 to 15; that stretch reads VQVVVLALVAQVTLS. Gln-16 bears the Pyrrolidone carboxylic acid mark. Gly-25 is subject to Glycine amide.

This sequence belongs to the GnRH family.

The protein localises to the secreted. Stimulates the secretion of gonadotropins. This chain is Progonadoliberin-3 (gnrh3), found in Oncorhynchus mykiss (Rainbow trout).